The following is a 187-amino-acid chain: ATP synthase subunit b 2 (187 aa).

A compositionally biased stretch (polar residues) spans 1–13 (MAESHATGTTTHT). Residues 1-21 (MAESHATGTTTHTEVPHGKPE) form a disordered region. A helical transmembrane segment spans residues 31-53 (ASQLVSFAIAFALLYVIVSRFAL).

Belongs to the ATPase B chain family. As to quaternary structure, F-type ATPases have 2 components, F(1) - the catalytic core - and F(0) - the membrane proton channel. F(1) has five subunits: alpha(3), beta(3), gamma(1), delta(1), epsilon(1). F(0) has three main subunits: a(1), b(2) and c(10-14). The alpha and beta chains form an alternating ring which encloses part of the gamma chain. F(1) is attached to F(0) by a central stalk formed by the gamma and epsilon chains, while a peripheral stalk is formed by the delta and b chains.

It is found in the cell inner membrane. F(1)F(0) ATP synthase produces ATP from ADP in the presence of a proton or sodium gradient. F-type ATPases consist of two structural domains, F(1) containing the extramembraneous catalytic core and F(0) containing the membrane proton channel, linked together by a central stalk and a peripheral stalk. During catalysis, ATP synthesis in the catalytic domain of F(1) is coupled via a rotary mechanism of the central stalk subunits to proton translocation. In terms of biological role, component of the F(0) channel, it forms part of the peripheral stalk, linking F(1) to F(0). The b'-subunit is a diverged and duplicated form of b found in plants and photosynthetic bacteria. The polypeptide is ATP synthase subunit b 2 (atpF2) (Afipia carboxidovorans (strain ATCC 49405 / DSM 1227 / KCTC 32145 / OM5) (Oligotropha carboxidovorans)).